The chain runs to 873 residues: Probable beta-glucosidase A (873 aa).

A signal peptide spans 1 to 19 (MRFGWLEVAALTAASVANA). N-linked (GlcNAc...) asparagine glycans are attached at residues Asn-71, Asn-222, and Asn-263. Asp-291 is a catalytic residue. Residues Asn-326, Asn-333, Asn-365, Asn-453, Asn-534, Asn-553, Asn-575, Asn-679, and Asn-725 are each glycosylated (N-linked (GlcNAc...) asparagine). The interval 731–764 (DSSDDPNYGWQDSEYIPEGARDGSPQPLLKAGGA) is disordered.

This sequence belongs to the glycosyl hydrolase 3 family.

It localises to the secreted. It carries out the reaction Hydrolysis of terminal, non-reducing beta-D-glucosyl residues with release of beta-D-glucose.. The protein operates within glycan metabolism; cellulose degradation. Functionally, beta-glucosidases are one of a number of cellulolytic enzymes involved in the degradation of cellulosic biomass. Catalyzes the last step releasing glucose from the inhibitory cellobiose. This is Probable beta-glucosidase A (bglA) from Aspergillus fumigatus (strain ATCC MYA-4609 / CBS 101355 / FGSC A1100 / Af293) (Neosartorya fumigata).